Consider the following 120-residue polypeptide: MAVDQGFPRSVRLTRPEQYKQVFGDARKLSDAGFTLLVRDNDGDSARLGLAISKKCARRAVDRQRIKRLVRETFRQHRQHLAPVDVVVMCRPAVTGWDNARIRASLERFWARLSTPCANP.

This sequence belongs to the RnpA family. As to quaternary structure, consists of a catalytic RNA component (M1 or rnpB) and a protein subunit.

It catalyses the reaction Endonucleolytic cleavage of RNA, removing 5'-extranucleotides from tRNA precursor.. RNaseP catalyzes the removal of the 5'-leader sequence from pre-tRNA to produce the mature 5'-terminus. It can also cleave other RNA substrates such as 4.5S RNA. The protein component plays an auxiliary but essential role in vivo by binding to the 5'-leader sequence and broadening the substrate specificity of the ribozyme. The polypeptide is Ribonuclease P protein component (Thioalkalivibrio sulfidiphilus (strain HL-EbGR7)).